The following is a 130-amino-acid chain: Histone H2A type 2-B (130 aa).

The disordered stretch occupies residues 1–22; sequence MSGRGKQGGKARAKAKSRSSRA. Ser2 carries the post-translational modification N-acetylserine. Ser2 carries the post-translational modification Phosphoserine; by RPS6KA5. The residue at position 4 (Arg4) is a Citrulline; alternate. Symmetric dimethylarginine; by PRMT5; alternate is present on Arg4. 2 positions are modified to N6-(2-hydroxyisobutyryl)lysine; alternate: Lys6 and Lys10. Position 6 is an N6-(beta-hydroxybutyryl)lysine; alternate (Lys6). Positions 7 to 19 are enriched in basic residues; the sequence is QGGKARAKAKSRS. An N6-lactoyllysine; alternate modification is found at Lys10. Lys10 is modified (N6-succinyllysine; alternate). Residues Lys14 and Lys16 each participate in a glycyl lysine isopeptide (Lys-Gly) (interchain with G-Cter in ubiquitin) cross-link. At Lys37 the chain carries N6-(2-hydroxyisobutyryl)lysine; alternate. Lys37 bears the N6-(beta-hydroxybutyryl)lysine; alternate mark. Position 37 is an N6-crotonyllysine; alternate (Lys37). N6-(2-hydroxyisobutyryl)lysine is present on residues Lys75 and Lys76. N6-(2-hydroxyisobutyryl)lysine; alternate is present on Lys96. Residue Lys96 is modified to N6-succinyllysine; alternate. At Lys96 the chain carries N6-glutaryllysine; alternate. At Gln105 the chain carries N5-methylglutamine. Residue Lys119 is modified to N6-(2-hydroxyisobutyryl)lysine; alternate. Lys119 and Lys120 each carry N6-crotonyllysine; alternate. Residues Lys119 and Lys120 each carry the N6-glutaryllysine; alternate modification. Lys120 is subject to N6-(beta-hydroxybutyryl)lysine; alternate. Lys120 is covalently cross-linked (Glycyl lysine isopeptide (Lys-Gly) (interchain with G-Cter in ubiquitin); alternate). Thr121 is modified (phosphothreonine; by DCAF1).

Belongs to the histone H2A family. As to quaternary structure, the nucleosome is a histone octamer containing two molecules each of H2A, H2B, H3 and H4 assembled in one H3-H4 heterotetramer and two H2A-H2B heterodimers. The octamer wraps approximately 147 bp of DNA. Deiminated on Arg-4 in granulocytes upon calcium entry. Post-translationally, monoubiquitination of Lys-120 (H2AK119Ub) by RING1, TRIM37 and RNF2/RING2 complex gives a specific tag for epigenetic transcriptional repression and participates in X chromosome inactivation of female mammals. It is involved in the initiation of both imprinted and random X inactivation. Ubiquitinated H2A is enriched in inactive X chromosome chromatin. Ubiquitination of H2A functions downstream of methylation of 'Lys-27' of histone H3 (H3K27me). H2AK119Ub by RNF2/RING2 can also be induced by ultraviolet and may be involved in DNA repair. Following DNA double-strand breaks (DSBs), it is ubiquitinated through 'Lys-63' linkage of ubiquitin moieties by the E2 ligase UBE2N and the E3 ligases RNF8 and RNF168, leading to the recruitment of repair proteins to sites of DNA damage. Ubiquitination at Lys-14 and Lys-16 (H2AK13Ub and H2AK15Ub, respectively) in response to DNA damage is initiated by RNF168 that mediates monoubiquitination at these 2 sites, and 'Lys-63'-linked ubiquitin are then conjugated to monoubiquitin; RNF8 is able to extend 'Lys-63'-linked ubiquitin chains in vitro. Deubiquitinated by USP51 at Lys-14 and Lys-16 (H2AK13Ub and H2AK15Ub, respectively) after damaged DNA is repaired. H2AK119Ub and ionizing radiation-induced 'Lys-63'-linked ubiquitination (H2AK13Ub and H2AK15Ub) are distinct events. In terms of processing, phosphorylation on Ser-2 (H2AS1ph) is enhanced during mitosis. Phosphorylation on Ser-2 by RPS6KA5/MSK1 directly represses transcription. Acetylation of H3 inhibits Ser-2 phosphorylation by RPS6KA5/MSK1. Phosphorylation at Thr-121 (H2AT120ph) by DCAF1 is present in the regulatory region of many tumor suppresor genes and down-regulates their transcription. Symmetric dimethylation on Arg-4 by the PRDM1/PRMT5 complex may play a crucial role in the germ-cell lineage. Post-translationally, glutamine methylation at Gln-105 (H2AQ104me) by FBL is specifically dedicated to polymerase I. It is present at 35S ribosomal DNA locus and impairs binding of the FACT complex. In terms of processing, crotonylation (Kcr) is specifically present in male germ cells and marks testis-specific genes in post-meiotic cells, including X-linked genes that escape sex chromosome inactivation in haploid cells. Crotonylation marks active promoters and enhancers and confers resistance to transcriptional repressors. It is also associated with post-meiotically activated genes on autosomes. Hydroxybutyrylation of histones is induced by starvation. Post-translationally, lactylated in macrophages by EP300/P300 by using lactoyl-CoA directly derived from endogenous or exogenous lactate, leading to stimulates gene transcription.

It is found in the nucleus. It localises to the chromosome. Core component of nucleosome. Nucleosomes wrap and compact DNA into chromatin, limiting DNA accessibility to the cellular machineries which require DNA as a template. Histones thereby play a central role in transcription regulation, DNA repair, DNA replication and chromosomal stability. DNA accessibility is regulated via a complex set of post-translational modifications of histones, also called histone code, and nucleosome remodeling. This chain is Histone H2A type 2-B, found in Mus musculus (Mouse).